The sequence spans 145 residues: uncharacterized protein (145 aa).

A run of 4 helical transmembrane segments spans residues methionine 1–isoleucine 21, threonine 28–leucine 48, serine 54–methionine 74, and phenylalanine 96–alanine 116.

Belongs to the DcuC/DcuD transporter (TC 2.A.61) family.

Its subcellular location is the cell membrane. This is an uncharacterized protein from Haemophilus influenzae (strain ATCC 51907 / DSM 11121 / KW20 / Rd).